We begin with the raw amino-acid sequence, 715 residues long: Polyribonucleotide nucleotidyltransferase (715 aa).

2 residues coordinate Mg(2+): Asp-487 and Asp-493. The KH domain occupies 554–613 (PRLYTFKINPEKIRDVIGKGGAVIRALTEETGTTIDIQDDGTITIAATSGEAAAAARSRI). The S1 motif domain maps to 623–691 (GKIYEGTVLK…DRGRVKLSMK (69 aa)).

It belongs to the polyribonucleotide nucleotidyltransferase family. It depends on Mg(2+) as a cofactor.

It is found in the cytoplasm. The catalysed reaction is RNA(n+1) + phosphate = RNA(n) + a ribonucleoside 5'-diphosphate. Functionally, involved in mRNA degradation. Catalyzes the phosphorolysis of single-stranded polyribonucleotides processively in the 3'- to 5'-direction. This is Polyribonucleotide nucleotidyltransferase from Dechloromonas aromatica (strain RCB).